Reading from the N-terminus, the 513-residue chain is Sterol 14-alpha demethylase (513 aa).

The helical transmembrane segment at 8–28 threads the bilayer; the sequence is AYALLAFVAIMALNVTYQFLF. N-linked (GlcNAc...) asparagine glycans are attached at residues Asn32 and Asn332. Residue Cys453 coordinates heme.

Belongs to the cytochrome P450 family. It depends on heme as a cofactor.

Its subcellular location is the endoplasmic reticulum membrane. The catalysed reaction is a 14alpha-methyl steroid + 3 reduced [NADPH--hemoprotein reductase] + 3 O2 = a Delta(14) steroid + formate + 3 oxidized [NADPH--hemoprotein reductase] + 4 H2O + 4 H(+). The enzyme catalyses a 14alpha-methyl steroid + reduced [NADPH--hemoprotein reductase] + O2 = a 14alpha-hydroxymethyl steroid + oxidized [NADPH--hemoprotein reductase] + H2O + H(+). It carries out the reaction a 14alpha-hydroxymethyl steroid + reduced [NADPH--hemoprotein reductase] + O2 = a 14alpha-formyl steroid + oxidized [NADPH--hemoprotein reductase] + 2 H2O + H(+). It catalyses the reaction a 14alpha-formyl steroid + reduced [NADPH--hemoprotein reductase] + O2 = a Delta(14) steroid + formate + oxidized [NADPH--hemoprotein reductase] + H2O + 2 H(+). The catalysed reaction is lanosterol + 3 reduced [NADPH--hemoprotein reductase] + 3 O2 = 4,4-dimethyl-5alpha-cholesta-8,14,24-trien-3beta-ol + formate + 3 oxidized [NADPH--hemoprotein reductase] + 4 H2O + 4 H(+). The enzyme catalyses lanosterol + reduced [NADPH--hemoprotein reductase] + O2 = 32-hydroxylanosterol + oxidized [NADPH--hemoprotein reductase] + H2O + H(+). It carries out the reaction 32-hydroxylanosterol + reduced [NADPH--hemoprotein reductase] + O2 = 32-oxolanosterol + oxidized [NADPH--hemoprotein reductase] + 2 H2O + H(+). It catalyses the reaction 32-oxolanosterol + reduced [NADPH--hemoprotein reductase] + O2 = 4,4-dimethyl-5alpha-cholesta-8,14,24-trien-3beta-ol + formate + oxidized [NADPH--hemoprotein reductase] + H2O + 2 H(+). The catalysed reaction is eburicol + 3 reduced [NADPH--hemoprotein reductase] + 3 O2 = 14-demethyleburicol + formate + 3 oxidized [NADPH--hemoprotein reductase] + 4 H2O + 4 H(+). The enzyme catalyses eburicol + reduced [NADPH--hemoprotein reductase] + O2 = 32-hydroxyeburicol + oxidized [NADPH--hemoprotein reductase] + H2O + H(+). It carries out the reaction 32-hydroxyeburicol + reduced [NADPH--hemoprotein reductase] + O2 = 32-oxoeburicol + oxidized [NADPH--hemoprotein reductase] + 2 H2O + H(+). It catalyses the reaction 32-oxoeburicol + reduced [NADPH--hemoprotein reductase] + O2 = 14-demethyleburicol + formate + oxidized [NADPH--hemoprotein reductase] + H2O + 2 H(+). Its pathway is steroid biosynthesis; sterol biosynthesis. Sterol 14alpha-demethylase, encoded by cyp51A, cyp51B and cyp51C, that plays a critical role in the third module of ergosterol biosynthesis pathway, being ergosterol the major sterol component in fungal membranes that participates in a variety of functions. The third module or late pathway involves the ergosterol synthesis itself through consecutive reactions that mainly occur in the endoplasmic reticulum (ER) membrane. In filamentous fungi, during the initial step of this module, lanosterol (lanosta-8,24-dien-3beta-ol) can be metabolized to eburicol. Sterol 14alpha-demethylase catalyzes the three-step oxidative removal of the 14alpha-methyl group (C-32) of both these sterols in the form of formate, and converts eburicol and lanosterol to 14-demethyleburicol (4,4,24-trimethylergosta-8,14,24(28)-trienol) and 4,4-dimethyl-5alpha-cholesta-8,14,24-trien-3beta-ol, respectively, which are further metabolized by other enzymes in the pathway to ergosterol. Can also use substrates not intrinsic to fungi, such as 24,25-dihydrolanosterol (DHL), producing 4,4'-dimethyl-8,14-cholestadien-3-beta-ol, but at lower rates than the endogenous substrates. In terms of biological role, as a target of azole drugs, plays a crucial role in azole drug susceptibility. This Aspergillus flavus (strain ATCC 200026 / FGSC A1120 / IAM 13836 / NRRL 3357 / JCM 12722 / SRRC 167) protein is Sterol 14-alpha demethylase.